We begin with the raw amino-acid sequence, 221 residues long: Holliday junction branch migration complex subunit RuvA (221 aa).

A domain I region spans residues 1–61 (MQIYQFGKIV…DYTKITYGFA (61 aa)). Positions 62 to 139 (SFRERILFED…RFNENHKNQT (78 aa)) are domain II. The segment at 133–155 (ENHKNQTEETNQDSQEKELEKKD) is disordered. Residues 140-166 (EETNQDSQEKELEKKDDLADITIQKSN) form a flexible linker region. Basic and acidic residues predominate over residues 146–155 (SQEKELEKKD). The segment at 167-221 (LEDKTAANLEDTLKMLGFKPRQIDYALTKVEPNENFENLIENAIKIISNAREFRN) is domain III.

Belongs to the RuvA family. Homotetramer. Forms an RuvA(8)-RuvB(12)-Holliday junction (HJ) complex. HJ DNA is sandwiched between 2 RuvA tetramers; dsDNA enters through RuvA and exits via RuvB. An RuvB hexamer assembles on each DNA strand where it exits the tetramer. Each RuvB hexamer is contacted by two RuvA subunits (via domain III) on 2 adjacent RuvB subunits; this complex drives branch migration. In the full resolvosome a probable DNA-RuvA(4)-RuvB(12)-RuvC(2) complex forms which resolves the HJ.

The protein resides in the cytoplasm. In terms of biological role, the RuvA-RuvB-RuvC complex processes Holliday junction (HJ) DNA during genetic recombination and DNA repair, while the RuvA-RuvB complex plays an important role in the rescue of blocked DNA replication forks via replication fork reversal (RFR). RuvA specifically binds to HJ cruciform DNA, conferring on it an open structure. The RuvB hexamer acts as an ATP-dependent pump, pulling dsDNA into and through the RuvAB complex. HJ branch migration allows RuvC to scan DNA until it finds its consensus sequence, where it cleaves and resolves the cruciform DNA. This is Holliday junction branch migration complex subunit RuvA from Mesomycoplasma hyopneumoniae (strain J / ATCC 25934 / NCTC 10110) (Mycoplasma hyopneumoniae).